Consider the following 188-residue polypeptide: MLKRLFVSGYKAHELGIFNEKNPGLAIIKKALKRELVRFLEEELEWVIISGQLGVEMWAAETVLELKKEYPHLKLAVITPFLNQEEKWKEETQDYYRNIVTQADYINSVYQTPYQGAWQLGEKDKFLLSNSDGILLVYDEENEGSPKFLSKLAAKKADNSDYQLFRINAYDLQAIAEEQQQELYNDSF.

Belongs to the UPF0398 family.

This Brevibacillus brevis (strain 47 / JCM 6285 / NBRC 100599) protein is UPF0398 protein BBR47_29830.